The sequence spans 370 residues: Chaperone protein DnaJ (370 aa).

The 65-residue stretch at 6-70 folds into the J domain; that stretch reads DYYEVLGVQR…EKRSMYDRFG (65 aa). The CR-type zinc-finger motif lies at 128-208; it reads GVEKTIEYRR…CRGEGRIRQT (81 aa). Positions 141, 144, 158, 161, 182, 185, 196, and 199 each coordinate Zn(2+). CXXCXGXG motif repeat units follow at residues 141–148, 158–165, 182–189, and 196–203; these read CPACRGSG, CPKCGGLG, CDMCRGEG, and CRECRGEG.

It belongs to the DnaJ family. Homodimer. Zn(2+) serves as cofactor.

The protein resides in the cytoplasm. Participates actively in the response to hyperosmotic and heat shock by preventing the aggregation of stress-denatured proteins and by disaggregating proteins, also in an autonomous, DnaK-independent fashion. Unfolded proteins bind initially to DnaJ; upon interaction with the DnaJ-bound protein, DnaK hydrolyzes its bound ATP, resulting in the formation of a stable complex. GrpE releases ADP from DnaK; ATP binding to DnaK triggers the release of the substrate protein, thus completing the reaction cycle. Several rounds of ATP-dependent interactions between DnaJ, DnaK and GrpE are required for fully efficient folding. Also involved, together with DnaK and GrpE, in the DNA replication of plasmids through activation of initiation proteins. This Roseiflexus castenholzii (strain DSM 13941 / HLO8) protein is Chaperone protein DnaJ.